A 465-amino-acid chain; its full sequence is ATP synthase subunit beta (465 aa).

An ATP-binding site is contributed by 153-160; the sequence is GGAGVGKT.

Belongs to the ATPase alpha/beta chains family. As to quaternary structure, F-type ATPases have 2 components, CF(1) - the catalytic core - and CF(0) - the membrane proton channel. CF(1) has five subunits: alpha(3), beta(3), gamma(1), delta(1), epsilon(1). CF(0) has three main subunits: a(1), b(2) and c(9-12). The alpha and beta chains form an alternating ring which encloses part of the gamma chain. CF(1) is attached to CF(0) by a central stalk formed by the gamma and epsilon chains, while a peripheral stalk is formed by the delta and b chains.

The protein resides in the cell membrane. The catalysed reaction is ATP + H2O + 4 H(+)(in) = ADP + phosphate + 5 H(+)(out). Produces ATP from ADP in the presence of a proton gradient across the membrane. The catalytic sites are hosted primarily by the beta subunits. This Clostridium perfringens (strain ATCC 13124 / DSM 756 / JCM 1290 / NCIMB 6125 / NCTC 8237 / Type A) protein is ATP synthase subunit beta.